Reading from the N-terminus, the 249-residue chain is Adenosylcobinamide-GDP ribazoletransferase (249 aa).

Transmembrane regions (helical) follow at residues 36 to 56, 57 to 77, 106 to 126, 133 to 153, 188 to 208, and 226 to 246; these read LVGFLLGSIAAGVCYAMHSIG, LNLAADVLGLVTIITLTGGLH, VGAMGVIALATVLLLKIAFLF, KLTAFIMAPMAGRWAMVLAIT, LWLFGLPGLALLGIVFFITWL, and GALGEMIETWVIFLILLGQQI.

This sequence belongs to the CobS family. It depends on Mg(2+) as a cofactor.

It is found in the cell membrane. It carries out the reaction alpha-ribazole + adenosylcob(III)inamide-GDP = adenosylcob(III)alamin + GMP + H(+). The enzyme catalyses alpha-ribazole 5'-phosphate + adenosylcob(III)inamide-GDP = adenosylcob(III)alamin 5'-phosphate + GMP + H(+). The protein operates within cofactor biosynthesis; adenosylcobalamin biosynthesis; adenosylcobalamin from cob(II)yrinate a,c-diamide: step 7/7. Its function is as follows. Joins adenosylcobinamide-GDP and alpha-ribazole to generate adenosylcobalamin (Ado-cobalamin). Also synthesizes adenosylcobalamin 5'-phosphate from adenosylcobinamide-GDP and alpha-ribazole 5'-phosphate. This Desulforamulus reducens (strain ATCC BAA-1160 / DSM 100696 / MI-1) (Desulfotomaculum reducens) protein is Adenosylcobinamide-GDP ribazoletransferase.